The following is a 448-amino-acid chain: tRNA(Ile)-lysidine synthase (448 aa).

Serine 25–serine 30 serves as a coordination point for ATP.

The protein belongs to the tRNA(Ile)-lysidine synthase family.

The protein resides in the cytoplasm. It catalyses the reaction cytidine(34) in tRNA(Ile2) + L-lysine + ATP = lysidine(34) in tRNA(Ile2) + AMP + diphosphate + H(+). Ligates lysine onto the cytidine present at position 34 of the AUA codon-specific tRNA(Ile) that contains the anticodon CAU, in an ATP-dependent manner. Cytidine is converted to lysidine, thus changing the amino acid specificity of the tRNA from methionine to isoleucine. In Brucella canis (strain ATCC 23365 / NCTC 10854 / RM-666), this protein is tRNA(Ile)-lysidine synthase.